A 242-amino-acid chain; its full sequence is DnaJ homolog subfamily B member 6 (242 aa).

The region spanning 3-69 is the J domain; that stretch reads EYYDVLGVQR…KKRDIYDKYG (67 aa).

Homooligomer.

The protein localises to the cytoplasm. It is found in the perinuclear region. The protein resides in the nucleus. Functionally, has a stimulatory effect on the ATPase activity of HSP70 in a dose-dependent and time-dependent manner and hence acts as a co-chaperone of HSP70. Plays an indispensable role in the organization of KRT8/KRT18 filaments. Acts as an endogenous molecular chaperone for neuronal proteins including huntingtin. Suppresses aggregation and toxicity of polyglutamine-containing, aggregation-prone proteins. Also reduces cellular toxicity and caspase-3 activity. The chain is DnaJ homolog subfamily B member 6 from Xenopus tropicalis (Western clawed frog).